The following is a 466-amino-acid chain: MSGVRIPLFPRFIPHGTVKLESAALKKLNSLELSGGYAVAVSGGVDSITLLNLVAALHKTQATSRPVVLTGNHGFRAEADHETRFVQKRAVALGLDCEILRWNRHRTSSKSQETAREIRYSLLHQWCTEHSVKFLLTAHNKSDQAETVLMHLERGSGIDGLSGMHERSVFGDITIYRPLLGFTRQEILEYATQKQLSWVEDPSNQDPKYRRTFFRNLIAESKNPGVVVDRLCRTTSHMHRALACILHYVRSSLDYCLEFSPLGFITVKSQELRSVPEEIASRLLLLSLMAMGGKDHKPRYSAFWPILTKILQGQDFTPRTLHGCKVRKEPDGNFSIVRELARIETKIGVKTIAETIQWDRRFAIKIMCTHNASAAETTSCSAKHAPNPSEETQNLYITPLGNGSLPEHLVHVNRDVACSLPVLAHGDKVLAYPWQNHNIGVSPTISVEEVLVRRGVINLICHQLYR.

42–47 serves as a coordination point for ATP; it reads SGGVDS.

This sequence belongs to the tRNA(Ile)-lysidine synthase family.

The protein resides in the cytoplasm. The catalysed reaction is cytidine(34) in tRNA(Ile2) + L-lysine + ATP = lysidine(34) in tRNA(Ile2) + AMP + diphosphate + H(+). Its function is as follows. Ligates lysine onto the cytidine present at position 34 of the AUA codon-specific tRNA(Ile) that contains the anticodon CAU, in an ATP-dependent manner. Cytidine is converted to lysidine, thus changing the amino acid specificity of the tRNA from methionine to isoleucine. This chain is tRNA(Ile)-lysidine synthase, found in Anaplasma marginale (strain St. Maries).